Here is a 433-residue protein sequence, read N- to C-terminus: FAD-dependent monooxygenase notI (433 aa).

Residues Glu-45 and Arg-117 each coordinate FAD. Arg-195 is an active-site residue. Asp-314 and Ala-327 together coordinate FAD.

It belongs to the paxM FAD-dependent monooxygenase family. Requires FAD as cofactor.

Its pathway is alkaloid biosynthesis. Functionally, FAD-dependent monooxygenase; part of the gene cluster that mediates the biosynthesis of notoamide, a fungal indole alkaloid that belongs to a family of natural products containing a characteristic bicyclo[2.2.2]diazaoctane core. The first step of notoamide biosynthesis involves coupling of L-proline and L-tryptophan by the bimodular NRPS notE, to produce cyclo-L-tryptophan-L-proline called brevianamide F. The reverse prenyltransferase notF then acts as a deoxybrevianamide E synthase and converts brevianamide F to deoxybrevianamide E via reverse prenylation at C-2 of the indole ring leading to the bicyclo[2.2.2]diazaoctane core. Deoxybrevianamide E is further hydroxylated at C-6 of the indole ring, likely catalyzed by the cytochrome P450 monooxygenase notG, to yield 6-hydroxy-deoxybrevianamide E. 6-hydroxy-deoxybrevianamide E is a specific substrate of the prenyltransferase notC for normal prenylation at C-7 to produce 6-hydroxy-7-prenyl-deoxybrevianamide, also called notoamide S. As the proposed pivotal branching point in notoamide biosynthesis, notoamide S can be diverted to notoamide E through an oxidative pyran ring closure putatively catalyzed by either notH cytochrome P450 monooxygenase or the notD FAD-linked oxidoreductase. This step would be followed by an indole 2,3-epoxidation-initiated pinacol-like rearrangement catalyzed by the notB FAD-dependent monooxygenase leading to the formation of notoamide C and notoamide D. On the other hand notoamide S is converted to notoamide T by notH (or notD), a bifunctional oxidase that also functions as the intramolecular Diels-Alderase responsible for generation of (+)-notoamide T. To generate antipodal (-)-notoaminide T, notH' (or notD') in Aspergillus versicolor is expected to catalyze a Diels-Alder reaction leading to the opposite stereochemistry. The remaining oxidoreductase notD (or notH) likely catalyzes the oxidative pyran ring formation to yield (+)-stephacidin A. The FAD-dependent monooxygenase notI is highly similar to notB and is predicted to catalyze a similar conversion from (+)-stephacidin A to (-)-notoamide B via the 2,3-epoxidation of (+)-stephacidin A followed by a pinacol-type rearrangement. Finally, it remains unclear which enzyme could be responsible for the final hydroxylation steps leading to notoamide A and sclerotiamide. This chain is FAD-dependent monooxygenase notI, found in Aspergillus sp. (strain MF297-2).